The sequence spans 142 residues: Large ribosomal subunit protein uL13 (142 aa).

Belongs to the universal ribosomal protein uL13 family. In terms of assembly, part of the 50S ribosomal subunit.

This protein is one of the early assembly proteins of the 50S ribosomal subunit, although it is not seen to bind rRNA by itself. It is important during the early stages of 50S assembly. This is Large ribosomal subunit protein uL13 from Vibrio parahaemolyticus serotype O3:K6 (strain RIMD 2210633).